A 185-amino-acid polypeptide reads, in one-letter code: Large ribosomal subunit protein uL5 (185 aa).

It belongs to the universal ribosomal protein uL5 family. As to quaternary structure, part of the 50S ribosomal subunit; part of the 5S rRNA/L5/L18/L25 subcomplex. Contacts the 5S rRNA and the P site tRNA. Forms a bridge to the 30S subunit in the 70S ribosome.

Its function is as follows. This is one of the proteins that bind and probably mediate the attachment of the 5S RNA into the large ribosomal subunit, where it forms part of the central protuberance. In the 70S ribosome it contacts protein S13 of the 30S subunit (bridge B1b), connecting the 2 subunits; this bridge is implicated in subunit movement. Contacts the P site tRNA; the 5S rRNA and some of its associated proteins might help stabilize positioning of ribosome-bound tRNAs. This chain is Large ribosomal subunit protein uL5, found in Protochlamydia amoebophila (strain UWE25).